Consider the following 745-residue polypeptide: Immunoglobulin superfamily containing leucine-rich repeat protein 2 (745 aa).

Positions 1 to 19 are cleaved as a signal peptide; the sequence is MGPFGALCLAWALLGVVRA. Positions 20–51 constitute an LRRNT domain; sequence CPEPCACVDKYAHQFADCAYKELREVPEGLPA. The Extracellular portion of the chain corresponds to 20-589; the sequence is CPEPCACVDK…VFSTKKELPS (570 aa). 2 N-linked (GlcNAc...) asparagine glycosylation sites follow: asparagine 52 and asparagine 73. 5 LRR repeats span residues 52 to 73, 76 to 97, 100 to 123, 124 to 145, and 148 to 169; these read NVTTLSLSANKITVLRRGAFVN, QVTSLWLAHSEVRTVESGALAV, QLKNLDLSHNLISNFPWSDLRNLS, ALQLLKMNHNRLGSLPRDALGA, and DLRSLRINNNRLRTLEPGTFDA. An N-linked (GlcNAc...) asparagine glycan is attached at asparagine 121. One can recognise an LRRCT domain in the interval 181–232; sequence NPFHCSCGLVWLQAWAASTRVSLPEPDSIACASPPELQGVPVHRLPALPCAP. Residues 233–372 enclose the Ig-like domain; sequence PSVRLSAEPP…GTNSTSLRVT (140 aa). The cysteines at positions 260 and 356 are disulfide-linked. Positions 290–300 are enriched in basic and acidic residues; sequence KEEDGGDKVED. The segment at 290-328 is disordered; it reads KEEDGGDKVEDGEGDGDEDLPTQTEAPTPTPAPAWPAPP. Positions 317 to 328 are enriched in pro residues; that stretch reads TPTPAPAWPAPP. Asparagine 338 and asparagine 365 each carry an N-linked (GlcNAc...) asparagine glycan. The interval 376 to 423 is disordered; sequence AGPPKHAPGTGEEPDAQVPTSERKATTKGRSNSVLPFKPEGKTKGQGL. Asparagine 474 and asparagine 563 each carry an N-linked (GlcNAc...) asparagine glycan. A helical membrane pass occupies residues 590–610; it reads LLVIVTVSVFLLVLATVPLLG. At 611–745 the chain is on the cytoplasmic side; it reads AACCHLLAKH…INGNYRQTAG (135 aa). A disordered region spans residues 654–697; that stretch reads SEKSYPARGEAGGEEPEEVPEEGLDEDVEQGDPSGDLQREESLA. Over residues 665–683 the composition is skewed to acidic residues; sequence GGEEPEEVPEEGLDEDVEQ. Tyrosine 719 is subject to Phosphotyrosine. Residue serine 720 is modified to Phosphoserine.

In terms of assembly, homomultimer. Interacts with NTRK1/TrkA. At 11.5 dpc, expressed in spinal nerves, their roots and the ventral spinal cord. At 12.5 dpc, detected in the ventral spinal cord, dorsal root ganglia (DRG), dorsal and ventral roots and sympathetic chain ganglia. At 12.5 dpc, expressed in almost all motor neurons which also express RET and in almost all DRG sensory neurons which also express NTRK1. At 18.5 dpc, expressed only in a subset of NTRK1-expressing neurons but still expressed in nearly all RET-expressing neurons.

It localises to the cell membrane. Functionally, required for axon extension during neural development. This chain is Immunoglobulin superfamily containing leucine-rich repeat protein 2 (Islr2), found in Mus musculus (Mouse).